Consider the following 245-residue polypeptide: tRNA pseudouridine synthase A 2 (245 aa).

D53 acts as the Nucleophile in catalysis. Y111 serves as a coordination point for substrate.

Belongs to the tRNA pseudouridine synthase TruA family. In terms of assembly, homodimer.

The catalysed reaction is uridine(38/39/40) in tRNA = pseudouridine(38/39/40) in tRNA. In terms of biological role, formation of pseudouridine at positions 38, 39 and 40 in the anticodon stem and loop of transfer RNAs. The polypeptide is tRNA pseudouridine synthase A 2 (Bacillus cereus (strain ATCC 14579 / DSM 31 / CCUG 7414 / JCM 2152 / NBRC 15305 / NCIMB 9373 / NCTC 2599 / NRRL B-3711)).